The sequence spans 589 residues: Arylsulfatase L (589 aa).

Residues Met1 to Ser31 form the signal peptide. Ca(2+) is bound by residues Asp46 and Asp47. Asn58 carries N-linked (GlcNAc...) asparagine glycosylation. Cys86 lines the Ca(2+) pocket. Cys86 acts as the Nucleophile in catalysis. The residue at position 86 (Cys86) is a 3-oxoalanine (Cys). Residue Asn125 is glycosylated (N-linked (GlcNAc...) asparagine). Position 145 (Lys145) interacts with substrate. Residue His147 is part of the active site. N-linked (GlcNAc...) asparagine glycosylation occurs at Asn258. Position 301 (His301) interacts with substrate. The N-linked (GlcNAc...) asparagine glycan is linked to Asn344. Ca(2+) is bound by residues Asp353 and His354. Lys378 contacts substrate.

This sequence belongs to the sulfatase family. It depends on Ca(2+) as a cofactor. Post-translationally, N-glycosylated. The conversion to 3-oxoalanine (also known as C-formylglycine, FGly), of a serine or cysteine residue in prokaryotes and of a cysteine residue in eukaryotes, is critical for catalytic activity. In terms of tissue distribution, expressed in the pancreas, liver and kidney.

Its subcellular location is the golgi apparatus. The protein resides in the golgi stack. The enzyme catalyses an aryl sulfate + H2O = a phenol + sulfate + H(+). Inhibited by millimolar concentrations of warfarin. Functionally, exhibits arylsulfatase activity towards the artificial substrate 4-methylumbelliferyl sulfate. May be essential for the correct composition of cartilage and bone matrix during development. Has no activity toward steroid sulfates. This chain is Arylsulfatase L, found in Homo sapiens (Human).